The chain runs to 391 residues: Eukaryotic initiation factor 4A-3 (391 aa).

Residues 18–46 (ASFAEMGIKDDLLRGVYQYGFEKPSAIQQ) carry the Q motif motif. The Helicase ATP-binding domain maps to 49–219 (VLPIISGRDV…SKFMTDPVRI (171 aa)). 62–69 (AQSGTGKT) contacts ATP. A DEAD box motif is present at residues 167-170 (DESD). The 162-residue stretch at 230 to 391 (GIKQFFVAVE…EMPMNVADLI (162 aa)) folds into the Helicase C-terminal domain.

This sequence belongs to the DEAD box helicase family. eIF4A subfamily. As to quaternary structure, eIF4F is a multi-subunit complex, the composition of which varies with external and internal environmental conditions. It is composed of at least EIF4A, EIF4E and EIF4G.

It carries out the reaction ATP + H2O = ADP + phosphate + H(+). ATP-dependent RNA helicase which is a subunit of the eIF4F complex involved in cap recognition and is required for mRNA binding to ribosome. In the current model of translation initiation, eIF4A unwinds RNA secondary structures in the 5'-UTR of mRNAs which is necessary to allow efficient binding of the small ribosomal subunit, and subsequent scanning for the initiator codon. This Nicotiana plumbaginifolia (Leadwort-leaved tobacco) protein is Eukaryotic initiation factor 4A-3.